Consider the following 183-residue polypeptide: MAILRLENGTTYTQLADISLELAKLNVTLNYWPIENEATRQLLKEASLTDEEKEIVLTSLDGYFEQLKQEAGYQARDLIVLHPDIANLDTLLAKFERCHTHADDEVRYIIDGEGVFGFVFPDGSQGELTIQPQEYINVPAHSEHWFHLTASKRVKAVRYFTTTAGWVPEYTETVIRFPSLTAV.

Residues histidine 99, histidine 101, glutamate 105, and histidine 144 each coordinate Fe(2+). Residues histidine 99, histidine 101, glutamate 105, and histidine 144 each coordinate Ni(2+).

This sequence belongs to the acireductone dioxygenase (ARD) family. As to quaternary structure, monomer. Fe(2+) serves as cofactor. Ni(2+) is required as a cofactor.

The enzyme catalyses 1,2-dihydroxy-5-(methylsulfanyl)pent-1-en-3-one + O2 = 3-(methylsulfanyl)propanoate + CO + formate + 2 H(+). The catalysed reaction is 1,2-dihydroxy-5-(methylsulfanyl)pent-1-en-3-one + O2 = 4-methylsulfanyl-2-oxobutanoate + formate + 2 H(+). It participates in amino-acid biosynthesis; L-methionine biosynthesis via salvage pathway; L-methionine from S-methyl-5-thio-alpha-D-ribose 1-phosphate: step 5/6. Catalyzes 2 different reactions between oxygen and the acireductone 1,2-dihydroxy-3-keto-5-methylthiopentene (DHK-MTPene) depending upon the metal bound in the active site. Fe-containing acireductone dioxygenase (Fe-ARD) produces formate and 2-keto-4-methylthiobutyrate (KMTB), the alpha-ketoacid precursor of methionine in the methionine recycle pathway. Ni-containing acireductone dioxygenase (Ni-ARD) produces methylthiopropionate, carbon monoxide and formate, and does not lie on the methionine recycle pathway. In Microcystis aeruginosa, this protein is Acireductone dioxygenase.